Consider the following 172-residue polypeptide: MKRDKKEQVVSEVSEKLRRSQGIYLTEFQGLSVARMAELRNEFRKAGVEYRVVKNTLIKKALSDMEGADKLAPALKSTTAVAFGYDDPIAPARVITKFSKTNEALKFKMAAIDGVVFGSDKLPALSEMLTKTENIGRAAGVINNVVASVPMVVNAVMRNLVSVIDQVGKQKQ.

It belongs to the universal ribosomal protein uL10 family. As to quaternary structure, part of the ribosomal stalk of the 50S ribosomal subunit. The N-terminus interacts with L11 and the large rRNA to form the base of the stalk. The C-terminus forms an elongated spine to which L12 dimers bind in a sequential fashion forming a multimeric L10(L12)X complex.

Forms part of the ribosomal stalk, playing a central role in the interaction of the ribosome with GTP-bound translation factors. In Chlorobium luteolum (strain DSM 273 / BCRC 81028 / 2530) (Pelodictyon luteolum), this protein is Large ribosomal subunit protein uL10.